The chain runs to 512 residues: Histidine ammonia-lyase (512 aa).

A cross-link (5-imidazolinone (Ala-Gly)) is located at residues 142-144 (ASG). A 2,3-didehydroalanine (Ser) modification is found at Ser143.

This sequence belongs to the PAL/histidase family. Post-translationally, contains an active site 4-methylidene-imidazol-5-one (MIO), which is formed autocatalytically by cyclization and dehydration of residues Ala-Ser-Gly.

Its subcellular location is the cytoplasm. It carries out the reaction L-histidine = trans-urocanate + NH4(+). Its pathway is amino-acid degradation; L-histidine degradation into L-glutamate; N-formimidoyl-L-glutamate from L-histidine: step 1/3. The sequence is that of Histidine ammonia-lyase from Bartonella tribocorum (strain CIP 105476 / IBS 506).